We begin with the raw amino-acid sequence, 540 residues long: MAAKDVKFGNDARVKMLRGVNVLADAVKVTLGPKGRNVVLDKSFGAPTITKDGVSVAREIELEDKFENMGAQMVKEVASKANDAAGDGTTTATVLAQAIITEGLKAVAAGMNPMDLKRGIDKAVIAAVEELKALSVPCSDSKAIAQVGTISANSDETVGKMIAEAMDKVGKEGVITVEEGTGLQDELDVVEGMQFDRGYLSPYFINKPETGAVELESPFILLADKKISNIREMLPVLEAVAKAGKPLVIVAEDVEGEALATLVVNTMRGIVKVAAVKAPGFGDRRKAMLQDIATLTGGTVISEEIGLELEKATLEDLGQAKRVVINKDTTTIIDGTGEEAAIQGRVAQIRQQVEEATSDYDKEKLQERVAKLAGGVAVIKVGAATEVEMKEKKARVEDALAATRAAVEEGVVAGGGVALVRVAAKLASLTAQNEDQNVGIKVALRAMEAPLRQIVSNAGEEPSVVANNVKAGDGNYGYNAATEEYGNMIDFGILDPTKVTRSALQFAASVAGLMITTECMVTDLPKGDAPDLGGAGGMGG.

Residues T30–P33, K51, D87–T91, G415, N479–A481, and D495 contribute to the ATP site.

Belongs to the chaperonin (HSP60) family. As to quaternary structure, forms a cylinder of 14 subunits composed of two heptameric rings stacked back-to-back. Interacts with the co-chaperonin GroES.

The protein localises to the cytoplasm. It catalyses the reaction ATP + H2O + a folded polypeptide = ADP + phosphate + an unfolded polypeptide.. In terms of biological role, together with its co-chaperonin GroES, plays an essential role in assisting protein folding. The GroEL-GroES system forms a nano-cage that allows encapsulation of the non-native substrate proteins and provides a physical environment optimized to promote and accelerate protein folding. The sequence is that of Chaperonin GroEL from Pectobacterium carotovorum subsp. carotovorum (Erwinia carotovora subsp. carotovora).